The primary structure comprises 250 residues: 2,3-bisphosphoglycerate-dependent phosphoglycerate mutase (250 aa).

Substrate is bound by residues 10–17, 23–24, arginine 62, 89–92, lysine 100, 116–117, and 185–186; these read RHGESQWN, TG, ERHY, RR, and GN. Histidine 11 serves as the catalytic Tele-phosphohistidine intermediate. Residue glutamate 89 is the Proton donor/acceptor of the active site.

This sequence belongs to the phosphoglycerate mutase family. BPG-dependent PGAM subfamily. In terms of assembly, homodimer.

It catalyses the reaction (2R)-2-phosphoglycerate = (2R)-3-phosphoglycerate. Its pathway is carbohydrate degradation; glycolysis; pyruvate from D-glyceraldehyde 3-phosphate: step 3/5. Catalyzes the interconversion of 2-phosphoglycerate and 3-phosphoglycerate. This is 2,3-bisphosphoglycerate-dependent phosphoglycerate mutase from Sodalis glossinidius (strain morsitans).